The sequence spans 189 residues: dCTP deaminase, dUMP-forming (189 aa).

DCTP contacts are provided by residues 101 to 106 (KSSLGR), D119, 127 to 129 (TLE), Q148, Y162, and Q174. The Proton donor/acceptor role is filled by E129. Residues 163–189 (GSSEAGSKYQGQRGPTPSKAYLNFNRS) are disordered.

Belongs to the dCTP deaminase family. As to quaternary structure, homotrimer.

The catalysed reaction is dCTP + 2 H2O = dUMP + NH4(+) + diphosphate. It participates in pyrimidine metabolism; dUMP biosynthesis; dUMP from dCTP: step 1/1. Functionally, bifunctional enzyme that catalyzes both the deamination of dCTP to dUTP and the hydrolysis of dUTP to dUMP without releasing the toxic dUTP intermediate. This is dCTP deaminase, dUMP-forming from Rhodococcus erythropolis (strain PR4 / NBRC 100887).